Consider the following 280-residue polypeptide: F420-dependent methylenetetrahydromethanopterin dehydrogenase (280 aa).

The protein belongs to the MTD family.

The enzyme catalyses 5,10-methylenetetrahydromethanopterin + oxidized coenzyme F420-(gamma-L-Glu)(n) + 2 H(+) = 5,10-methenyl-5,6,7,8-tetrahydromethanopterin + reduced coenzyme F420-(gamma-L-Glu)(n). It functions in the pathway one-carbon metabolism; methanogenesis from CO(2); 5,10-methylene-5,6,7,8-tetrahydromethanopterin from 5,10-methenyl-5,6,7,8-tetrahydromethanopterin (coenzyme F420 route): step 1/1. Catalyzes the reversible reduction of methenyl-H(4)MPT(+) to methylene-H(4)MPT. This chain is F420-dependent methylenetetrahydromethanopterin dehydrogenase, found in Methanoculleus marisnigri (strain ATCC 35101 / DSM 1498 / JR1).